A 360-amino-acid polypeptide reads, in one-letter code: Protein Wnt-2 (360 aa).

An N-terminal signal peptide occupies residues 1–25 (MNACLVGIWLWLPLLFTWLSPEVSS). Disulfide bonds link Cys76-Cys87, Cys127-Cys135, Cys137-Cys157, Cys206-Cys220, Cys208-Cys215, Cys278-Cys309, Cys294-Cys304, Cys308-Cys348, Cys324-Cys339, Cys326-Cys336, and Cys331-Cys332. A lipid anchor (O-palmitoleoyl serine; by PORCN) is attached at Ser212. Asn295 carries an N-linked (GlcNAc...) asparagine glycan.

Belongs to the Wnt family. In terms of processing, palmitoleoylation is required for efficient binding to frizzled receptors. Depalmitoleoylation leads to Wnt signaling pathway inhibition.

The protein localises to the secreted. It is found in the extracellular space. The protein resides in the extracellular matrix. Its function is as follows. Ligand for members of the frizzled family of seven transmembrane receptors. Probable developmental protein. May be a signaling molecule which affects the development of discrete regions of tissues. Is likely to signal over only few cell diameters. This is Protein Wnt-2 (WNT2) from Muntiacus muntjak (Barking deer).